The primary structure comprises 404 residues: Deoxyguanosinetriphosphate triphosphohydrolase-like protein (404 aa).

Positions 69 to 217 (RLTHSLEVAQ…AGIADDIAYD (149 aa)) constitute an HD domain.

The protein belongs to the dGTPase family. Type 2 subfamily.

This Rhodopseudomonas palustris (strain BisB18) protein is Deoxyguanosinetriphosphate triphosphohydrolase-like protein.